A 245-amino-acid chain; its full sequence is 5-oxoprolinase subunit A (245 aa).

The protein belongs to the LamB/PxpA family. Forms a complex composed of PxpA, PxpB and PxpC.

The enzyme catalyses 5-oxo-L-proline + ATP + 2 H2O = L-glutamate + ADP + phosphate + H(+). In terms of biological role, catalyzes the cleavage of 5-oxoproline to form L-glutamate coupled to the hydrolysis of ATP to ADP and inorganic phosphate. The polypeptide is 5-oxoprolinase subunit A (Cronobacter sakazakii (strain ATCC BAA-894) (Enterobacter sakazakii)).